A 642-amino-acid polypeptide reads, in one-letter code: 1-deoxy-D-xylulose-5-phosphate synthase (642 aa).

Residues histidine 73 and 114–116 each bind thiamine diphosphate; that span reads SHA. Aspartate 145 lines the Mg(2+) pocket. Residues 146-147, asparagine 175, phenylalanine 286, and glutamate 367 each bind thiamine diphosphate; that span reads GA. A Mg(2+)-binding site is contributed by asparagine 175.

This sequence belongs to the transketolase family. DXPS subfamily. In terms of assembly, homodimer. It depends on Mg(2+) as a cofactor. The cofactor is thiamine diphosphate.

The enzyme catalyses D-glyceraldehyde 3-phosphate + pyruvate + H(+) = 1-deoxy-D-xylulose 5-phosphate + CO2. It participates in metabolic intermediate biosynthesis; 1-deoxy-D-xylulose 5-phosphate biosynthesis; 1-deoxy-D-xylulose 5-phosphate from D-glyceraldehyde 3-phosphate and pyruvate: step 1/1. Its function is as follows. Catalyzes the acyloin condensation reaction between C atoms 2 and 3 of pyruvate and glyceraldehyde 3-phosphate to yield 1-deoxy-D-xylulose-5-phosphate (DXP). The sequence is that of 1-deoxy-D-xylulose-5-phosphate synthase from Saccharopolyspora erythraea (strain ATCC 11635 / DSM 40517 / JCM 4748 / NBRC 13426 / NCIMB 8594 / NRRL 2338).